The following is a 67-amino-acid chain: uncharacterized protein (67 aa).

This is an uncharacterized protein from Acidianus filamentous virus 2 (isolate Italy/Pozzuoli) (AFV-2).